An 888-amino-acid chain; its full sequence is E3 ubiquitin-protein ligase SH3RF1 (888 aa).

The RING-type zinc-finger motif lies at 12 to 53; that stretch reads CPVCLERLDASAKVLPCQHTFCKRCLLGIVGSRNELRCPECR. Polar residues predominate over residues 108 to 127; sequence SSKDLQSSQGGQQPRVQSWS. The disordered stretch occupies residues 108–128; sequence SSKDLQSSQGGQQPRVQSWSP. 2 consecutive SH3 domains span residues 134-193 and 196-259; these read PQLP…IIKP and QPPP…FNSA. Residues 275–321 are disordered; it reads DAGECSSAAAQSSTAPKHSDTKKNTKKRHSFTSLTMANKSSQASQNR. An interaction with RAC1 region spans residues 292 to 362; sequence HSDTKKNTKK…APSQVHISTT (71 aa). The residue at position 304 (S304) is a Phosphoserine. Residues 305 to 321 show a composition bias toward polar residues; sequence FTSLTMANKSSQASQNR. The tract at residues 440 to 543 is interaction with AKT2; it reads HLRPQTRPSV…STAGGPAQKL (104 aa). In terms of domain architecture, SH3 3 spans 445-506; it reads TRPSVYVAIY…PGNYVAPVTR (62 aa). Disordered stretches follow at residues 516–548, 620–639, and 684–741; these read VPMS…GNGV, SVGL…LMPG, and TVLP…ASPT. Residues 520-535 show a composition bias toward polar residues; the sequence is TAGQTSRGVTMVSPST. S532 is subject to Phosphoserine. Over residues 692 to 704 the composition is skewed to polar residues; the sequence is SPDSASSACGNSS. The span at 707 to 718 shows a compositional bias: basic and acidic residues; sequence KPDKDSKKEKKG. The residue at position 735 (S735) is a Phosphoserine. One can recognise an SH3 4 domain in the interval 829–888; sequence VVCERHRVVVSYPPQSEAELELKEGDIVFVHKKREDGWFKGTLQRNGKTGLFPGSFVENI.

This sequence belongs to the SH3RF family. As to quaternary structure, interacts with RAC1; in a GTP-dependent manner. Interacts with MAP3K10/MLK2 and MAP3K11/MLK3. Interacts with MAPK8IP; this interaction leads to the PJAC complex (POSH-JIP or SH3RF1/MAPK8IP apoptotic complex) with a 1:1 ratio. Interacts with SIAH1. Interacts with HERP1. Probably part of a signaling complex that may contain SH3RF1, MAPK8IP, DLK1, MAP2K4/MKK4, MAP2K7/MKK7, MAPK8/JNK1, MAPK9/JNK2, AKT1 and AKT2. Found in a complex with RAC2, MAP3K7/TAK1, MAP2K7/MKK7, MAPK8IP1/JIP1, MAPK8/JNK1 and MAPK9/JNK2. Found in a complex with RAC1, MAP3K11/MLK3, MAP2K7/MKK7, MAPK8IP1/JIP1 and MAPK8/JNK1. Interacts with SH3RF2. Phosphorylated at Ser-304 by AKT1 and AKT2. When phosphorylated, it has reduced ability to bind Rac. In terms of processing, autoubiquitinated. Ubiquitinated by SH3RF2, leading to proteasome-mediated degradation.

It is found in the cytoplasm. The protein localises to the perinuclear region. The protein resides in the cell projection. Its subcellular location is the lamellipodium. It localises to the golgi apparatus. It is found in the trans-Golgi network. It carries out the reaction S-ubiquitinyl-[E2 ubiquitin-conjugating enzyme]-L-cysteine + [acceptor protein]-L-lysine = [E2 ubiquitin-conjugating enzyme]-L-cysteine + N(6)-ubiquitinyl-[acceptor protein]-L-lysine.. Its pathway is protein modification; protein ubiquitination. Its function is as follows. Has E3 ubiquitin-protein ligase activity. In the absence of an external substrate, it can catalyze self-ubiquitination. Stimulates ubiquitination of potassium channel KCNJ1, enhancing it's dynamin-dependent and clathrin-independent endocytosis. Acts as a scaffold protein that coordinates with MAPK8IP1/JIP1 in organizing different components of the JNK pathway, including RAC1 or RAC2, MAP3K11/MLK3 or MAP3K7/TAK1, MAP2K7/MKK7, MAPK8/JNK1 and/or MAPK9/JNK2 into a functional multiprotein complex to ensure the effective activation of the JNK signaling pathway. Regulates the differentiation of CD4(+) and CD8(+) T-cells and promotes T-helper 1 (Th1) cell differentiation. Regulates the activation of MAPK8/JNK1 and MAPK9/JNK2 in CD4(+) T-cells and the activation of MAPK8/JNK1 in CD8(+) T-cells. Plays a crucial role in the migration of neocortical neurons in the developing brain. Controls proper cortical neuronal migration and the formation of proximal cytoplasmic dilation in the leading process (PCDLP) in migratory neocortical neurons by regulating the proper localization of activated RAC1 and F-actin assembly. In terms of biological role, (Microbial infection) Plays an essential role in the targeting of HIV-1 Gag to the plasma membrane, this function is dependent on it's RING domain, and hence it's E3 ligase activity. The sequence is that of E3 ubiquitin-protein ligase SH3RF1 (SH3RF1) from Homo sapiens (Human).